Consider the following 222-residue polypeptide: CEACAM1-like protein UL7 (222 aa).

N-linked (GlcNAc...) asparagine; by host glycans are attached at residues Asn-50, Asn-56, Asn-60, Asn-71, Asn-105, Asn-109, Asn-125, Asn-132, Asn-147, Asn-164, Asn-168, and Asn-189. The chain crosses the membrane as a helical span at residues 193–213 (LALVGVVVFLVLIVVCIMGWW).

The protein belongs to the RL11 family. Post-translationally, highly glycosylated.

It is found in the secreted. The protein resides in the host cell membrane. Plays a role in modulating the host immune response and affecting host cytokine production. Structurally and functionally homolog of host CEACAM1, induces endothelial cell angiogenesis. This Homo sapiens (Human) protein is CEACAM1-like protein UL7 (UL7).